The following is a 254-amino-acid chain: Sugar fermentation stimulation protein homolog (254 aa).

Belongs to the SfsA family.

The protein is Sugar fermentation stimulation protein homolog of Parasynechococcus marenigrum (strain WH8102).